The chain runs to 154 residues: Egg-lysin (154 aa).

A signal peptide spans 1 to 18; sequence MKLFVLCIFAMMATLAMS.

Homodimer. Sperm.

In terms of biological role, dissolves the egg vitelline layer nonenzymatically during fertilization. It creates a hole of about 3 mu-m in diameter through which the sperm pass. The chain is Egg-lysin from Haliotis kamtschatkana (Pinto abalone).